The chain runs to 192 residues: 7-methyl-GTP pyrophosphatase (192 aa).

D69 functions as the Proton acceptor in the catalytic mechanism.

The protein belongs to the Maf family. YceF subfamily. Requires a divalent metal cation as cofactor.

It localises to the cytoplasm. The catalysed reaction is N(7)-methyl-GTP + H2O = N(7)-methyl-GMP + diphosphate + H(+). Functionally, nucleoside triphosphate pyrophosphatase that hydrolyzes 7-methyl-GTP (m(7)GTP). May have a dual role in cell division arrest and in preventing the incorporation of modified nucleotides into cellular nucleic acids. The sequence is that of 7-methyl-GTP pyrophosphatase (maf-1) from Pseudomonas syringae pv. tomato (strain ATCC BAA-871 / DC3000).